The primary structure comprises 206 residues: Large ribosomal subunit protein uL4 (206 aa).

The tract at residues 63–97 (MYKQKGTGRARHHSARAPQFRGGGKAHGPVVRSHE) is disordered. A compositionally biased stretch (basic residues) spans 64-77 (YKQKGTGRARHHSA).

Belongs to the universal ribosomal protein uL4 family. Part of the 50S ribosomal subunit.

In terms of biological role, one of the primary rRNA binding proteins, this protein initially binds near the 5'-end of the 23S rRNA. It is important during the early stages of 50S assembly. It makes multiple contacts with different domains of the 23S rRNA in the assembled 50S subunit and ribosome. Functionally, forms part of the polypeptide exit tunnel. The sequence is that of Large ribosomal subunit protein uL4 from Rhizobium rhizogenes (strain K84 / ATCC BAA-868) (Agrobacterium radiobacter).